A 324-amino-acid polypeptide reads, in one-letter code: tRNA U34 carboxymethyltransferase (324 aa).

Residues Lys92, Trp106, Lys111, Gly131, 153–155 (DPS), Met197, Tyr201, and Arg316 contribute to the carboxy-S-adenosyl-L-methionine site.

Belongs to the class I-like SAM-binding methyltransferase superfamily. CmoB family. As to quaternary structure, homotetramer.

The enzyme catalyses carboxy-S-adenosyl-L-methionine + 5-hydroxyuridine(34) in tRNA = 5-carboxymethoxyuridine(34) in tRNA + S-adenosyl-L-homocysteine + H(+). Its function is as follows. Catalyzes carboxymethyl transfer from carboxy-S-adenosyl-L-methionine (Cx-SAM) to 5-hydroxyuridine (ho5U) to form 5-carboxymethoxyuridine (cmo5U) at position 34 in tRNAs. This chain is tRNA U34 carboxymethyltransferase, found in Hahella chejuensis (strain KCTC 2396).